Here is a 2174-residue protein sequence, read N- to C-terminus: Mediator of RNA polymerase II transcription subunit 13 (2174 aa).

Position 395 is a phosphoserine (Ser-395). The segment at 435–477 (RNAGQQGQAPSLGQQQQILPKHKTNEKQEKSEKPQKRPLTPFH) is disordered. Over residues 438-451 (GQQGQAPSLGQQQQ) the composition is skewed to low complexity. The span at 457 to 469 (KTNEKQEKSEKPQ) shows a compositional bias: basic and acidic residues. Phosphoserine occurs at positions 500, 504, 530, and 537. Positions 709–730 (FPDKKDRQNSEREAGKKHKVED) are enriched in basic and acidic residues. Disordered stretches follow at residues 709–735 (FPDK…TSSV), 749–769 (SPSI…PSTS), and 787–816 (FNSD…ESKT). The span at 805-815 (SDDKASCKESK) shows a compositional bias: basic and acidic residues. Phosphoserine occurs at positions 826 and 890. The tract at residues 959–1054 (FIKEGDGSNM…ASTPSTCRPL (96 aa)) is disordered. The span at 992–1003 (PPSNSGAGILPS) shows a compositional bias: low complexity. Pro residues predominate over residues 1004–1015 (PSTPRFPTPRTP). Ser-1029 carries the phosphoserine modification. Residues 1040–1053 (DLYSPASTPSTCRP) show a composition bias toward polar residues. 2 consecutive short sequence motifs (LXXLL motif) follow at residues 1188-1192 (LILLL) and 1279-1283 (LRMLL). Composition is skewed to polar residues over residues 1484-1498 (SQSL…NTGN) and 1563-1606 (SMNS…SLPT). Disordered regions lie at residues 1484–1505 (SQSL…PSAT), 1557–1617 (SFPP…ESTM), and 2015–2048 (LPAS…RLLS).

This sequence belongs to the Mediator complex subunit 13 family. As to quaternary structure, component of the Mediator complex, which is composed of MED1, MED4, MED6, MED7, MED8, MED9, MED10, MED11, MED12, MED13, MED13L, MED14, MED15, MED16, MED17, MED18, MED19, MED20, MED21, MED22, MED23, MED24, MED25, MED26, MED27, MED29, MED30, MED31, CCNC, CDK8 and CDC2L6/CDK11. The MED12, MED13, CCNC and CDK8 subunits form a distinct module termed the CDK8 module. Mediator containing the CDK8 module is less active than Mediator lacking this module in supporting transcriptional activation. Individual preparations of the Mediator complex lacking one or more distinct subunits have been variously termed ARC, CRSP, DRIP, PC2, SMCC and TRAP. As to expression, ubiquitous.

The protein resides in the nucleus. Component of the Mediator complex, a coactivator involved in the regulated transcription of nearly all RNA polymerase II-dependent genes. Mediator functions as a bridge to convey information from gene-specific regulatory proteins to the basal RNA polymerase II transcription machinery. Mediator is recruited to promoters by direct interactions with regulatory proteins and serves as a scaffold for the assembly of a functional preinitiation complex with RNA polymerase II and the general transcription factors. In Homo sapiens (Human), this protein is Mediator of RNA polymerase II transcription subunit 13.